Here is a 334-residue protein sequence, read N- to C-terminus: Ornithine carbamoyltransferase, catabolic (334 aa).

Carbamoyl phosphate contacts are provided by residues 57–60, glutamine 84, arginine 108, and 135–138; these read STRT and HPTQ. L-ornithine-binding positions include asparagine 168, aspartate 232, and 236 to 237; that span reads SM. Carbamoyl phosphate contacts are provided by residues 274-275 and arginine 321; that span reads CL.

This sequence belongs to the aspartate/ornithine carbamoyltransferase superfamily. OTCase family.

It localises to the cytoplasm. The enzyme catalyses carbamoyl phosphate + L-ornithine = L-citrulline + phosphate + H(+). It functions in the pathway amino-acid degradation; L-arginine degradation via ADI pathway; carbamoyl phosphate from L-arginine: step 2/2. Functionally, reversibly catalyzes the transfer of the carbamoyl group from carbamoyl phosphate (CP) to the N(epsilon) atom of ornithine (ORN) to produce L-citrulline. This is Ornithine carbamoyltransferase, catabolic (arcB) from Avibacterium paragallinarum (Haemophilus gallinarum).